Consider the following 115-residue polypeptide: Cyclin-dependent kinase 2-associated protein 1 (115 aa).

Positions 20–25 (GSVHSP) are interaction with CDK2AP2. Serine 46 is subject to Phosphoserine; by IKKE.

This sequence belongs to the CDK2AP family. As to quaternary structure, homodimer. Component of the nucleosome remodeling and deacetylase (NuRD) repressor complex, composed of core proteins MTA1, MTA2, MTA3, RBBP4, RBBP7, HDAC1, HDAC2, MBD2, MBD3, and peripherally associated proteins CDK2AP1, CDK2AP2, GATAD2A, GATAD2B, CHD3, CHD4 and CHD5. The exact stoichiometry of the NuRD complex is unknown, and some subunits such as MBD2 and MBD3, GATAD2A and GATAD2B, and CHD3, CHD4 and CHD5 define mutually exclusive NuRD complexes. Interacts with monomeric unphosphorylated CDK2. Interacts with CDK2AP2. Interacts with GATAD2A. Interacts with HDAC1. Interacts with HDAC2. Interacts with MBD2. Interacts with MBD3. Interacts with RBBP4. Interacts with RBBP7. In terms of processing, phosphorylated in vitro by IKBKE at Ser-46.

It is found in the nucleus. It localises to the chromosome. Its function is as follows. Inhibitor of cyclin-dependent kinase CDK2. Also acts as a component of the histone deacetylase NuRD complex which participates in the remodeling of chromatin. The protein is Cyclin-dependent kinase 2-associated protein 1 (CDK2AP1) of Homo sapiens (Human).